Consider the following 352-residue polypeptide: Fe(3+) ions import ATP-binding protein FbpC (352 aa).

The region spanning 5-239 is the ABC transporter domain; that stretch reads LHIGHLSKSF…PADLDAALFI (235 aa). An ATP-binding site is contributed by 37–44; that stretch reads GASGCGKT.

The protein belongs to the ABC transporter superfamily. Fe(3+) ion importer (TC 3.A.1.10) family. In terms of assembly, the complex is composed of two ATP-binding proteins (FbpC), two transmembrane proteins (FbpB) and a solute-binding protein (FbpA).

The protein resides in the cell inner membrane. It catalyses the reaction Fe(3+)(out) + ATP + H2O = Fe(3+)(in) + ADP + phosphate + H(+). Part of the ABC transporter complex FbpABC involved in Fe(3+) ions import. Responsible for energy coupling to the transport system. This Neisseria gonorrhoeae (strain ATCC 700825 / FA 1090) protein is Fe(3+) ions import ATP-binding protein FbpC.